The primary structure comprises 196 residues: Beta-crystallin A4 (196 aa).

T2 carries the N-acetylthreonine modification. An N-terminal arm region spans residues 2 to 11 (TLQCTKSAGH). Beta/gamma crystallin 'Greek key' domains follow at residues 12–51 (WRVV…KVLS) and 52–98 (GAWV…RPVA). The connecting peptide stretch occupies residues 99-104 (CANHRD). 2 consecutive Beta/gamma crystallin 'Greek key' domains span residues 105–146 (SRLT…HVQS) and 147–195 (GAWV…RRIQ).

Homo/heterodimer, or complexes of higher-order. The structure of beta-crystallin oligomers seems to be stabilized through interactions between the N-terminal arms.

Crystallins are the dominant structural components of the vertebrate eye lens. This chain is Beta-crystallin A4 (Cryba4), found in Rattus norvegicus (Rat).